A 244-amino-acid chain; its full sequence is Cell division protein ZipA (244 aa).

At 1-4 (MSDM) the chain is on the periplasmic side. A helical transmembrane segment spans residues 5–25 (AMIRIGILIAGLLLVAAIFLF). The Cytoplasmic portion of the chain corresponds to 26-244 (GRPKKSPQGR…APPLTKSPRW (219 aa)). The interval 30-91 (KSPQGRRVDK…GAGGNDVGKR (62 aa)) is disordered. The segment covering 35–50 (RRVDKDDTQPRERREP) has biased composition (basic and acidic residues).

This sequence belongs to the ZipA family. In terms of assembly, interacts with FtsZ via their C-terminal domains.

The protein localises to the cell inner membrane. Essential cell division protein that stabilizes the FtsZ protofilaments by cross-linking them and that serves as a cytoplasmic membrane anchor for the Z ring. Also required for the recruitment to the septal ring of downstream cell division proteins. This Xanthomonas campestris pv. campestris (strain ATCC 33913 / DSM 3586 / NCPPB 528 / LMG 568 / P 25) protein is Cell division protein ZipA.